We begin with the raw amino-acid sequence, 616 residues long: Chaperone protein HscA (616 aa).

This sequence belongs to the heat shock protein 70 family.

Chaperone involved in the maturation of iron-sulfur cluster-containing proteins. Has a low intrinsic ATPase activity which is markedly stimulated by HscB. Involved in the maturation of IscU. This Salmonella paratyphi C (strain RKS4594) protein is Chaperone protein HscA.